Consider the following 603-residue polypeptide: Peroxisomal targeting signal receptor (603 aa).

A Glycyl cysteine thioester (Cys-Gly) (interchain with G-Cter in ubiquitin) cross-link involves residue Cys10. The tract at residues 11-33 is amphipathic helix 1 (AH1); the sequence is SANSNAIAQFNKHTQQDRSLQRQ. Lys22 is covalently cross-linked (Glycyl lysine isopeptide (Lys-Gly) (interchain with G-Cter in ubiquitin)). The tract at residues 23 to 49 is disordered; the sequence is HTQQDRSLQRQAANQQGIVQNGQGFKK. Over residues 31–45 the composition is skewed to polar residues; the sequence is QRQAANQQGIVQNGQ. Positions 58-76 are amphipathic helix 2 (AH2); that stretch reads RQNMDQFMNNGPSQSNFQF. 3 short sequence motifs (wxxxF/Y motif) span residues 99–103, 128–132, and 192–196; these read WTNEF, WATEF, and WDNQF. Positions 232-248 are amphipathic helix 4 (AH4); that stretch reads FQEVWDSLNSEEVENDF. The WxxxF/Y motif 4 signature appears at 271–275; that stretch reads WEKDF. 5 TPR repeats span residues 304–338, 339–372, 449–482, 484–516, and 518–550; these read ESDP…NEGH, INAW…HPEN, PDVQ…KPDD, VLWN…KPTF, and RARY…HQVE.

The protein belongs to the peroxisomal targeting signal receptor family. In terms of assembly, interacts (via WxxxF/Y and LVxEF motifs) with PEX14; promoting translocation through the PEX13-PEX14 docking complex. Monoubiquitinated at Cys-10 by PEX2 during PEX5 passage through the retrotranslocation channel: monoubiquitination acts as a signal for PEX5 extraction and is required for proper export from peroxisomes and recycling. When PEX5 recycling is compromised, polyubiquitinated at Lys-22 by PEX10 during its passage through the retrotranslocation channel, leading to its degradation.

The protein resides in the cytoplasm. It localises to the cytosol. The protein localises to the peroxisome matrix. In terms of biological role, receptor that mediates peroxisomal import of proteins containing a C-terminal PTS1-type tripeptide peroxisomal targeting signal (SKL-type). Binds to cargo proteins containing a PTS1 peroxisomal targeting signal in the cytosol, and translocates them into the peroxisome matrix by passing through the PEX13-PEX14 docking complex along with cargo proteins. PEX5 receptor is then retrotranslocated into the cytosol, leading to release of bound cargo in the peroxisome matrix, and reset for a subsequent peroxisome import cycle. This is Peroxisomal targeting signal receptor (PEX5) from Debaryomyces hansenii (strain ATCC 36239 / CBS 767 / BCRC 21394 / JCM 1990 / NBRC 0083 / IGC 2968) (Yeast).